Reading from the N-terminus, the 462-residue chain is CD-NTase-associated protein 4 (462 aa).

The N-terminal endonuclease domain stretch occupies residues 1 to 226 (MSASLLEKQS…FENFICHALE (226 aa)). Active-site residues include D50, E67, and K69. Mg(2+) is bound at residue D50. The segment at 235 to 462 (DPIKINLSAS…QYIPTAELNL (228 aa)) is C-terminal SAVED domain. 2',3',3'-c-tri-AMP contacts are provided by residues 299-301 (KQR), W449, and Y454.

Belongs to the Cap4 nuclease family. In terms of assembly, a monomer in the absence of ligand, in its presence it forms oligomers. Requires a divalent metal cation as cofactor.

Its activity is regulated as follows. DNase activity is activated upon ligand binding. Inhibited by EDTA. Its function is as follows. Effector DNase of a CBASS antivirus system. CBASS (cyclic oligonucleotide-based antiphage signaling system) provides immunity against bacteriophage. The CD-NTase protein synthesizes cyclic nucleotides in response to infection; these serve as specific second messenger signals. The signals activate a diverse range of effectors, leading to bacterial cell death and thus abortive phage infection. A type II-C(AAAA) CBASS system. In terms of biological role, binds cyclic nucleotide second messengers (synthesized by CdnD, the cognate CD-NTase in the CBASS operon). Ligand binding activates it to endonucleolytically degrade dsDNA to approximately 6 bp length fragments, with a preference for 5'-C or 5'-G cleavage site. The minor product of CdnD is the activating nucleotide; also binds the major product (2',3',3'-cyclic AMP-AMP-AMP) but is not activated by it. Only binds DNA in the presence of ligand. Is not activated by c-di-AMP, c-di-GMP, 3'3'-cyclic GMP-AMP (3'3'-cGAMP) or 3',3',3'-cyclic AMP-AMP-GMP. The chain is CD-NTase-associated protein 4 from Acinetobacter sp. (strain ATCC 27244 / 9458).